The chain runs to 295 residues: Universal stress protein Mb2028c (295 aa).

ATP is bound by residues glycine 13, 117 to 123, 131 to 132, glycine 165, aspartate 198, 262 to 268, and 276 to 278; these read GSSGRGA, SV, GSHGRGG, and SVS.

The protein belongs to the universal stress protein A family.

This is Universal stress protein Mb2028c from Mycobacterium bovis (strain ATCC BAA-935 / AF2122/97).